The following is a 498-amino-acid chain: Glycerol kinase (498 aa).

Thr12 contributes to the ADP binding site. ATP is bound by residues Thr12, Thr13, and Ser14. Thr12 is a sn-glycerol 3-phosphate binding site. Arg16 serves as a coordination point for ADP. Sn-glycerol 3-phosphate contacts are provided by Arg82, Glu83, Tyr134, and Asp244. The glycerol site is built by Arg82, Glu83, Tyr134, Asp244, and Gln245. Thr266 and Gly310 together coordinate ADP. The ATP site is built by Thr266, Gly310, Gln314, and Gly411. 2 residues coordinate ADP: Gly411 and Asn415.

The protein belongs to the FGGY kinase family.

The catalysed reaction is glycerol + ATP = sn-glycerol 3-phosphate + ADP + H(+). Its pathway is polyol metabolism; glycerol degradation via glycerol kinase pathway; sn-glycerol 3-phosphate from glycerol: step 1/1. Inhibited by fructose 1,6-bisphosphate (FBP). Functionally, key enzyme in the regulation of glycerol uptake and metabolism. Catalyzes the phosphorylation of glycerol to yield sn-glycerol 3-phosphate. This chain is Glycerol kinase, found in Chloroflexus aurantiacus (strain ATCC 29364 / DSM 637 / Y-400-fl).